The following is a 452-amino-acid chain: Tubulin beta-2 chain (452 aa).

8 residues coordinate GTP: Q11, E74, S143, V147, T148, G149, N209, and N231. Residue E74 coordinates Mg(2+). Residues 431-452 (QEATADDEAEFEEEGEVEGEYD) form a disordered region. A compositionally biased stretch (acidic residues) spans 434-452 (TADDEAEFEEEGEVEGEYD).

Belongs to the tubulin family. In terms of assembly, dimer of alpha and beta chains. A typical microtubule is a hollow water-filled tube with an outer diameter of 25 nm and an inner diameter of 15 nM. Alpha-beta heterodimers associate head-to-tail to form protofilaments running lengthwise along the microtubule wall with the beta-tubulin subunit facing the microtubule plus end conferring a structural polarity. Microtubules usually have 13 protofilaments but different protofilament numbers can be found in some organisms and specialized cells. Requires Mg(2+) as cofactor.

The protein resides in the cytoplasm. Its subcellular location is the cytoskeleton. Functionally, tubulin is the major constituent of microtubules, a cylinder consisting of laterally associated linear protofilaments composed of alpha- and beta-tubulin heterodimers. Microtubules grow by the addition of GTP-tubulin dimers to the microtubule end, where a stabilizing cap forms. Below the cap, tubulin dimers are in GDP-bound state, owing to GTPase activity of alpha-tubulin. The protein is Tubulin beta-2 chain of Homarus americanus (American lobster).